We begin with the raw amino-acid sequence, 230 residues long: PKHD-type hydroxylase Xfasm12_1709 (230 aa).

Residues 78–182 (RTLPPRFNRY…RIASFFWVQS (105 aa)) enclose the Fe2OG dioxygenase domain. Fe cation contacts are provided by His-96, Asp-98, and His-163. Position 173 (Arg-173) interacts with 2-oxoglutarate.

The cofactor is Fe(2+). L-ascorbate serves as cofactor.

The chain is PKHD-type hydroxylase Xfasm12_1709 from Xylella fastidiosa (strain M12).